We begin with the raw amino-acid sequence, 72 residues long: Translation initiation factor IF-1 (72 aa).

Positions 1 to 72 (MAKDDVIEIQ…TKGRITYRFK (72 aa)) constitute an S1-like domain.

It belongs to the IF-1 family. Component of the 30S ribosomal translation pre-initiation complex which assembles on the 30S ribosome in the order IF-2 and IF-3, IF-1 and N-formylmethionyl-tRNA(fMet); mRNA recruitment can occur at any time during PIC assembly.

The protein localises to the cytoplasm. One of the essential components for the initiation of protein synthesis. Stabilizes the binding of IF-2 and IF-3 on the 30S subunit to which N-formylmethionyl-tRNA(fMet) subsequently binds. Helps modulate mRNA selection, yielding the 30S pre-initiation complex (PIC). Upon addition of the 50S ribosomal subunit IF-1, IF-2 and IF-3 are released leaving the mature 70S translation initiation complex. In Lacticaseibacillus paracasei (strain ATCC 334 / BCRC 17002 / CCUG 31169 / CIP 107868 / KCTC 3260 / NRRL B-441) (Lactobacillus paracasei), this protein is Translation initiation factor IF-1.